A 198-amino-acid polypeptide reads, in one-letter code: Ribonuclease HII (198 aa).

The RNase H type-2 domain occupies 10 to 198; it reads QLVAGVDEVG…PVKRALGLAS (189 aa). A divalent metal cation contacts are provided by D16, E17, and D108.

The protein belongs to the RNase HII family. Requires Mn(2+) as cofactor. Mg(2+) serves as cofactor.

It is found in the cytoplasm. It catalyses the reaction Endonucleolytic cleavage to 5'-phosphomonoester.. Functionally, endonuclease that specifically degrades the RNA of RNA-DNA hybrids. This chain is Ribonuclease HII, found in Citrobacter koseri (strain ATCC BAA-895 / CDC 4225-83 / SGSC4696).